A 269-amino-acid chain; its full sequence is Photosystem I assembly factor PSA3, chloroplastic (269 aa).

The N-terminal 37 residues, 1–37, are a transit peptide targeting the chloroplast; that stretch reads MGALPVAHSLALTAAFLPCRRPAAHGRCRRRRYRAVV.

Its subcellular location is the plastid. It is found in the chloroplast thylakoid membrane. Functionally, nuclear genome-encoded factor required for the accumulation of photosystem I (PSI). Functions as a PSI biogenesis factor. Cooperates with PYG7 to promote the stable assembly of PSI in the thylakoid membrane. May target primarily the PsaC subunit. Does not seem to be required for the expression of chloroplast genes encoding PSI subunits. The chain is Photosystem I assembly factor PSA3, chloroplastic from Zea mays (Maize).